The following is a 230-amino-acid chain: 7-cyano-7-deazaguanine synthase (230 aa).

9–19 contributes to the ATP binding site; the sequence is YSGGLDSTTCL. Cys-190, Cys-200, Cys-203, and Cys-206 together coordinate Zn(2+).

Belongs to the QueC family. The cofactor is Zn(2+).

It carries out the reaction 7-carboxy-7-deazaguanine + NH4(+) + ATP = 7-cyano-7-deazaguanine + ADP + phosphate + H2O + H(+). It functions in the pathway purine metabolism; 7-cyano-7-deazaguanine biosynthesis. Functionally, catalyzes the ATP-dependent conversion of 7-carboxy-7-deazaguanine (CDG) to 7-cyano-7-deazaguanine (preQ(0)). The protein is 7-cyano-7-deazaguanine synthase of Syntrophotalea carbinolica (strain DSM 2380 / NBRC 103641 / GraBd1) (Pelobacter carbinolicus).